A 308-amino-acid polypeptide reads, in one-letter code: ADP,ATP carrier protein (308 aa).

3 Solcar repeats span residues 6–99 (KNFM…FKRM), 110–203 (KWFA…LKPV), and 211–297 (NNFL…LQVI). Helical transmembrane passes span 8 to 35 (FMVD…VKLL), 76 to 100 (TANV…KRMF), 108 to 128 (YWKW…VSLS), 179 to 200 (FNIS…YDSL), and 214 to 234 (LAAF…SYPI). Residues Arg81 and Lys93 each contribute to the ADP site. Arg238 is an ADP binding site. The important for transport activity stretch occupies residues 238–243 (RRRMMM). Residues 238-243 (RRRMMM) carry the Nucleotide carrier signature motif motif. Residues 274–294 (AGANILRAVAGAGVLAGYDQL) traverse the membrane as a helical segment.

It belongs to the mitochondrial carrier (TC 2.A.29) family. In terms of assembly, monomer.

The protein resides in the mitochondrion inner membrane. The catalysed reaction is ADP(in) + ATP(out) = ADP(out) + ATP(in). With respect to regulation, the matrix-open state (m-state) is inhibited by the membrane-permeable bongkrekic acid (BKA). The cytoplasmic-open state (c-state) is inhibited by the membrane-impermeable toxic inhibitor carboxyatractyloside (CATR). ADP:ATP antiporter that mediates import of ADP into the mitochondrial matrix for ATP synthesis, and export of ATP out to fuel the cell. Cycles between the cytoplasmic-open state (c-state) and the matrix-open state (m-state): operates by the alternating access mechanism with a single substrate-binding site intermittently exposed to either the cytosolic (c-state) or matrix (m-state) side of the inner mitochondrial membrane. This is ADP,ATP carrier protein (ABT) from Chlamydomonas reinhardtii (Chlamydomonas smithii).